We begin with the raw amino-acid sequence, 180 residues long: NADH-quinone oxidoreductase subunit I (180 aa).

4Fe-4S ferredoxin-type domains are found at residues 50-80 and 90-119; these read LTRDPDGEERCVACNLCAVACPVGCISLQKA and EFFRINFSRCIFCGLCEEACPTTAIQLTPD. [4Fe-4S] cluster contacts are provided by C60, C63, C66, C70, C99, C102, C105, and C109.

The protein belongs to the complex I 23 kDa subunit family. In terms of assembly, NDH-1 is composed of 13 different subunits. Subunits NuoA, H, J, K, L, M, N constitute the membrane sector of the complex. Requires [4Fe-4S] cluster as cofactor.

Its subcellular location is the cell inner membrane. The catalysed reaction is a quinone + NADH + 5 H(+)(in) = a quinol + NAD(+) + 4 H(+)(out). Functionally, NDH-1 shuttles electrons from NADH, via FMN and iron-sulfur (Fe-S) centers, to quinones in the respiratory chain. The immediate electron acceptor for the enzyme in this species is believed to be ubiquinone. Couples the redox reaction to proton translocation (for every two electrons transferred, four hydrogen ions are translocated across the cytoplasmic membrane), and thus conserves the redox energy in a proton gradient. The chain is NADH-quinone oxidoreductase subunit I from Yersinia enterocolitica serotype O:8 / biotype 1B (strain NCTC 13174 / 8081).